Consider the following 219-residue polypeptide: Large ribosomal subunit protein uL4 (219 aa).

The disordered stretch occupies residues 43-101; it reads AAARQGTHKTKRRGEVRGGGKKPYRQKGTGRARQGSTRAPQFAGGGVVHGPQPRDYSQR. Positions 61 to 72 are enriched in basic residues; it reads GGKKPYRQKGTG.

The protein belongs to the universal ribosomal protein uL4 family. Part of the 50S ribosomal subunit.

Its function is as follows. One of the primary rRNA binding proteins, this protein initially binds near the 5'-end of the 23S rRNA. It is important during the early stages of 50S assembly. It makes multiple contacts with different domains of the 23S rRNA in the assembled 50S subunit and ribosome. Forms part of the polypeptide exit tunnel. This Streptomyces coelicolor (strain ATCC BAA-471 / A3(2) / M145) protein is Large ribosomal subunit protein uL4.